Here is a 314-residue protein sequence, read N- to C-terminus: Homeobox protein DBX1-A (314 aa).

Positions 175 to 234 (GMLRRAVFSDVQRKALEKMFQKQKYISKPDRKKLAAKLGLKDSQVKIWFQNRRMKWRNSK) form a DNA-binding region, homeobox. Disordered regions lie at residues 234 to 279 (KERE…CAPS) and 292 to 314 (STDS…ITVS). Residues 258-267 (DLSDVGKKSS) are compositionally biased toward basic and acidic residues. The span at 305 to 314 (SESEDEITVS) shows a compositional bias: acidic residues.

Belongs to the H2.0 homeobox family.

The protein resides in the nucleus. The polypeptide is Homeobox protein DBX1-A (dbx1a) (Danio rerio (Zebrafish)).